Consider the following 347-residue polypeptide: Holliday junction branch migration complex subunit RuvB (347 aa).

The segment at 1 to 183 (MTPPSRIVTP…FGIPIRLNFY (183 aa)) is large ATPase domain (RuvB-L). Residues leucine 22, arginine 23, glycine 64, lysine 67, threonine 68, threonine 69, 130–132 (EDF), arginine 173, tyrosine 183, and arginine 220 each bind ATP. Threonine 68 contacts Mg(2+). Positions 184 to 254 (TVEELEGIVS…IADHALSALE (71 aa)) are small ATPAse domain (RuvB-S). A head domain (RuvB-H) region spans residues 257-347 (AAGLDAMDRR…QFGLFGGDEE (91 aa)). DNA-binding residues include arginine 293, arginine 312, and arginine 317.

The protein belongs to the RuvB family. Homohexamer. Forms an RuvA(8)-RuvB(12)-Holliday junction (HJ) complex. HJ DNA is sandwiched between 2 RuvA tetramers; dsDNA enters through RuvA and exits via RuvB. An RuvB hexamer assembles on each DNA strand where it exits the tetramer. Each RuvB hexamer is contacted by two RuvA subunits (via domain III) on 2 adjacent RuvB subunits; this complex drives branch migration. In the full resolvosome a probable DNA-RuvA(4)-RuvB(12)-RuvC(2) complex forms which resolves the HJ.

It localises to the cytoplasm. The enzyme catalyses ATP + H2O = ADP + phosphate + H(+). In terms of biological role, the RuvA-RuvB-RuvC complex processes Holliday junction (HJ) DNA during genetic recombination and DNA repair, while the RuvA-RuvB complex plays an important role in the rescue of blocked DNA replication forks via replication fork reversal (RFR). RuvA specifically binds to HJ cruciform DNA, conferring on it an open structure. The RuvB hexamer acts as an ATP-dependent pump, pulling dsDNA into and through the RuvAB complex. RuvB forms 2 homohexamers on either side of HJ DNA bound by 1 or 2 RuvA tetramers; 4 subunits per hexamer contact DNA at a time. Coordinated motions by a converter formed by DNA-disengaged RuvB subunits stimulates ATP hydrolysis and nucleotide exchange. Immobilization of the converter enables RuvB to convert the ATP-contained energy into a lever motion, pulling 2 nucleotides of DNA out of the RuvA tetramer per ATP hydrolyzed, thus driving DNA branch migration. The RuvB motors rotate together with the DNA substrate, which together with the progressing nucleotide cycle form the mechanistic basis for DNA recombination by continuous HJ branch migration. Branch migration allows RuvC to scan DNA until it finds its consensus sequence, where it cleaves and resolves cruciform DNA. The sequence is that of Holliday junction branch migration complex subunit RuvB from Rhodopseudomonas palustris (strain BisA53).